A 202-amino-acid chain; its full sequence is 7-cyano-7-deazaguanine synthase 1 (202 aa).

ATP is bound at residue 7–17; that stretch reads MSGGLDSSSAA. Cysteine 166, cysteine 174, cysteine 177, and cysteine 180 together coordinate Zn(2+).

The protein belongs to the QueC family. Zn(2+) serves as cofactor.

It carries out the reaction 7-carboxy-7-deazaguanine + NH4(+) + ATP = 7-cyano-7-deazaguanine + ADP + phosphate + H2O + H(+). Its pathway is purine metabolism; 7-cyano-7-deazaguanine biosynthesis. In terms of biological role, catalyzes the ATP-dependent conversion of 7-carboxy-7-deazaguanine (CDG) to 7-cyano-7-deazaguanine (preQ(0)). This Sulfurisphaera tokodaii (strain DSM 16993 / JCM 10545 / NBRC 100140 / 7) (Sulfolobus tokodaii) protein is 7-cyano-7-deazaguanine synthase 1 (queC1).